A 208-amino-acid polypeptide reads, in one-letter code: Ribosomal RNA small subunit methyltransferase G (208 aa).

Residues Gly78, Phe83, 101 to 103 (ERS), 129 to 130 (IE), and Arg142 contribute to the S-adenosyl-L-methionine site.

This sequence belongs to the methyltransferase superfamily. RNA methyltransferase RsmG family.

The protein localises to the cytoplasm. Its function is as follows. Specifically methylates the N7 position of a guanine in 16S rRNA. The chain is Ribosomal RNA small subunit methyltransferase G from Borrelia garinii subsp. bavariensis (strain ATCC BAA-2496 / DSM 23469 / PBi) (Borreliella bavariensis).